A 230-amino-acid polypeptide reads, in one-letter code: Thymidylate kinase (230 aa).

ATP is bound at residue 23–30 (GIDGAGKT).

This sequence belongs to the thymidylate kinase family.

It carries out the reaction dTMP + ATP = dTDP + ADP. Functionally, phosphorylation of dTMP to form dTDP in both de novo and salvage pathways of dTTP synthesis. The protein is Thymidylate kinase of Ureaplasma parvum serovar 3 (strain ATCC 27815 / 27 / NCTC 11736).